Consider the following 1330-residue polypeptide: Pre-mRNA-splicing factor CWC22 homolog (1330 aa).

The interval 1–377 (MGESDAESDS…AAKITERQRK (377 aa)) is disordered. Residues 9–36 (DSSSNSSSSDTSSGSDSDARSESSSSES) show a composition bias toward low complexity. Positions 46–94 (QEESAKDAKKTDDTDRGEKRAKERDAGQDEQPTEQKKTPAAEPRSERQH) are enriched in basic and acidic residues. Positions 99-113 (AGVEKQQEEAVAAAE) are enriched in low complexity. Residues 115 to 135 (ESEKLNEAKKVETPVQRKEEA) are compositionally biased toward basic and acidic residues. The segment covering 138 to 148 (SSVTKELNSPK) has biased composition (polar residues). Over residues 149-166 (AQEENAARELEERRKDEE) the composition is skewed to basic and acidic residues. The segment covering 168–177 (PVTTNGSSKE) has biased composition (polar residues). Residues T191 and T201 each carry the phosphothreonine modification. Basic and acidic residues-rich tracts occupy residues 191–201 (TADHIEEGEIT) and 208–236 (LPTK…SPDG). 2 positions are modified to phosphoserine: S219 and S221. A compositionally biased stretch (basic residues) spans 252–277 (SRRRRRSRSKGSRTRSRSKSPIRRRS). 2 stretches are compositionally biased toward basic and acidic residues: residues 278–307 (NSLE…EREK) and 316–325 (SSRRRDDSRE). The segment covering 355–366 (TETNADNETVTE) has biased composition (low complexity). One can recognise an MIF4G domain in the interval 420 to 603 (KKSIHGYINK…EVLFQIRKDG (184 aa)). The interval 660–697 (REILGSDDGSSSGSGSGSDSDSDSDGESGSDAEKKAEA) is disordered. The span at 665 to 678 (SDDGSSSGSGSGSD) shows a compositional bias: low complexity. The span at 679–689 (SDSDSDGESGS) shows a compositional bias: acidic residues. Residues 710–826 (ALRRTIYLTI…SWDVLECIQL (117 aa)) enclose the MI domain. Residues 926 to 1330 (FRDGSAPAGN…RSSRRSKGRS (405 aa)) form a disordered region. Over residues 941–951 (SSSSSSSSSSD) the composition is skewed to low complexity. Residues 952-963 (TDSEDSSEEDSS) show a composition bias toward acidic residues. The span at 964–976 (SDSSSESSSSDSS) shows a compositional bias: low complexity. Residues 980 to 1012 (KKKRKRKDKDKKKSKKATKEKSKKTKNKKKKKK) are compositionally biased toward basic residues. Basic and acidic residues predominate over residues 1013–1033 (AEKEQEKEKEKQRKSKKEKEK). The segment covering 1034 to 1054 (DKKRKKEEKKAAKKKSKHRRK) has biased composition (basic residues). Residues 1072-1082 (SESSDSSNSSS) show a composition bias toward low complexity. Positions 1089–1110 (PQAKIKRQEHVEKNKFRGRTQD) are enriched in basic and acidic residues. A Phosphothreonine modification is found at T1108. Phosphoserine is present on residues S1111, S1121, S1180, and S1181. Composition is skewed to basic and acidic residues over residues 1133-1195 (RRRD…VAHD) and 1203-1320 (SRSY…SRRE). Y1182 is modified (phosphotyrosine). Over residues 1321–1330 (RSSRRSKGRS) the composition is skewed to basic residues.

It belongs to the CWC22 family. Component of the spliceosome C complex. Interacts with eIF4AIII.

The protein resides in the nucleus speckle. Its function is as follows. Required for pre-mRNA splicing and for exon-junction complex (EJC) assembly. Hinders eIF4AIII from non-specifically binding RNA and escorts it to the splicing machinery to promote EJC assembly on mature mRNAs. The polypeptide is Pre-mRNA-splicing factor CWC22 homolog (ncm) (Drosophila melanogaster (Fruit fly)).